The primary structure comprises 755 residues: Cartilage oligomeric matrix protein (755 aa).

Positions 1–19 are cleaved as a signal peptide; the sequence is MGPTACVLVLALAILRATG. Residues 21 to 84 form a COMP N-terminal region; it reads GQIPLGGDLA…PARTPGLSVR (64 aa). One can recognise an EGF-like 1 domain in the interval 85-124; sequence PVPLCAPGSCFPGVVCSETATGARCGPCPPGYTGNGSHCT. Disulfide bonds link C89–C100, C94–C109, C112–C123, C129–C140, C134–C149, C152–C176, C182–C195, C189–C204, C207–C219, C227–C241, C235–C251, C253–C264, C280–C285, C290–C310, C326–C346, C349–C369, C385–C405, C408–C428, C446–C466, C482–C502, and C518–C739. A glycan (N-linked (GlcNAc...) asparagine) is linked at N119. Residues 125–177 form the EGF-like 2; calcium-binding domain; the sequence is DVNECNAHPCFPRVRCINTSPGFHCEACPPGFSGPTHEGVGLTFAKSNKQVCT. An EGF-like 3; calcium-binding domain is found at 178 to 220; that stretch reads DINECETGQHNCVPNSVCVNTRGSFQCGPCQPGFVGDQTSGCQ. Residues 223–265 enclose the EGF-like 4 domain; sequence GQHFCPDGSPSPCHEKANCVLERDGSRSCVCAVGWAGNGLLCG. TSP type-3 repeat units lie at residues 266–298, 299–334, 335–357, 358–393, 394–416, 417–454, 455–490, and 491–526; these read RDTD…NSGQ, EDVD…NPDQ, RNSD…NDDQ, KDTD…NFDQ, SDSD…NPDQ, RDVD…NSAQ, QDSD…NPGQ, and EDND…EVTL. Disordered stretches follow at residues 296-341 and 353-501; these read SGQE…DSDK and KNDD…VGDA. Composition is skewed to basic and acidic residues over residues 332–341 and 353–368; these read PDQRNSDSDK and KNDD…RGDA. Position 394 is a phosphoserine (S394). 2 stretches are compositionally biased toward basic and acidic residues: residues 412-424 and 456-465; these read DNPD…HDFV and DSDHDGKGDA. The tract at residues 525–755 is mediates cell survival and induction of the IAP family of survival proteins; it reads TLTDFRAFQT…DYESHRLQRV (231 aa). Residues 530–744 form the TSP C-terminal domain; it reads RAFQTVVLDP…LRYRCNDTIP (215 aa). N-linked (GlcNAc...) asparagine glycosylation is present at N740.

The protein belongs to the thrombospondin family. As to quaternary structure, pentamer; disulfide-linked. Exists in a more compact conformation in the presence of calcium and shows a more extended conformation in the absence of calcium. Interacts with ITGB3, ITGA5 and FN1. Binding to FN1 requires the presence of divalent cations (Ca(2+), Mg(2+) or Mn(2+)). The greatest amount of binding is seen in the presence of Mn(2+). Interacts with MATN1, MATN3, MATN4 and ACAN. Binds heparin, heparan sulfate and chondroitin sulfate. EDTA dimishes significantly its binding to ACAN and abolishes its binding to MATN3, MATN4 and chondroitin sulfate. Interacts with collagen I, II and IX, and interaction with these collagens is dependent on the presence of zinc ions. Interacts with ADAMTS12. Interacts with ITGA7. Ca(2+) is required as a cofactor. Post-translationally, proteolytically cleaved by metalloproteases ADAMTS4 and ADAMTS1 with ADAMTS4 showing more potent activity. As to expression, expressed in cartilage, including nasal, knee epiphyseal and rib tissues. Abundantly expressed in chondrocyte and tendon extracellular matrix (at protein level).

The protein localises to the secreted. It localises to the extracellular space. The protein resides in the extracellular matrix. Its function is as follows. Plays a role in the structural integrity of cartilage via its interaction with other extracellular matrix proteins such as the collagens and fibronectin. Can mediate the interaction of chondrocytes with the cartilage extracellular matrix through interaction with cell surface integrin receptors. Could play a role in the pathogenesis of osteoarthritis. Potent suppressor of apoptosis in both primary chondrocytes and transformed cells. Suppresses apoptosis by blocking the activation of caspase-3 and by inducing the IAP family of survival proteins (BIRC3, BIRC2, BIRC5 and XIAP). Essential for maintaining a vascular smooth muscle cells (VSMCs) contractile/differentiated phenotype under physiological and pathological stimuli. Maintains this phenotype of VSMCs by interacting with ITGA7. The chain is Cartilage oligomeric matrix protein from Mus musculus (Mouse).